The sequence spans 217 residues: ATP-binding protein BexA (217 aa).

Positions 2-217 (IRVNNVCKKY…AYQYYNETQK (216 aa)) constitute an ABC transporter domain. 38–45 (GRNGAGKS) contacts ATP.

Belongs to the ABC transporter superfamily.

The protein localises to the cell inner membrane. Putative ATP-binding protein, and an energy-coupling component of capsule polysaccharide export apparatus. This is ATP-binding protein BexA (bexA) from Haemophilus influenzae.